A 364-amino-acid chain; its full sequence is Adenosine 3'-phospho 5'-phosphosulfate transporter 2 (364 aa).

10 helical membrane passes run 39–59 (WLQF…YGYM), 74–94 (WTLT…ECII), 106–126 (IYGV…ASVG), 131–151 (PTQV…GILI), 157–177 (GWID…FTLA), 187–206 (SRGY…IGNI), 231–251 (VFIF…PFFL), 257–277 (TFGY…VVLT), 281–301 (VFGA…TIIL), and 310–330 (FTIE…LNLY).

The protein belongs to the nucleotide-sugar transporter family. SLC35B subfamily.

The protein resides in the golgi apparatus membrane. In terms of biological role, mediates the transport of adenosine 3'-phospho 5'-phosphosulfate (PAPS), from cytosol into Golgi. PAPS is a universal sulfuryl donor for sulfation events that take place in the Golgi. In Caenorhabditis elegans, this protein is Adenosine 3'-phospho 5'-phosphosulfate transporter 2 (pst-2).